A 630-amino-acid polypeptide reads, in one-letter code: Protein phosphatase 2C-like domain-containing protein 1 (630 aa).

In terms of domain architecture, PPM-type phosphatase spans 170–621; it reads GVGICEDRNS…DNITVMVIFL (452 aa). Over residues 557-569 the composition is skewed to basic and acidic residues; it reads TTHRKPCSEKVTD. A disordered region spans residues 557-578; the sequence is TTHRKPCSEKVTDRPTSVNDVA.

This sequence belongs to the PP2C family.

This chain is Protein phosphatase 2C-like domain-containing protein 1 (PP2D1), found in Homo sapiens (Human).